A 277-amino-acid polypeptide reads, in one-letter code: Photosystem I assembly factor PSA3, chloroplastic (277 aa).

A chloroplast-targeting transit peptide spans 1–45 (MVVVTHISTSFHQISPSFFHLRLRNPSTTSSSRPKLDGGFALSIR).

Interacts with PYG7.

The protein resides in the plastid. It is found in the chloroplast. The protein localises to the chloroplast thylakoid membrane. In terms of biological role, nuclear genome-encoded factor required for the accumulation of photosystem I (PSI). Functions as a PSI biogenesis factor. Cooperates with PYG7 to promote the stable assembly of PSI in the thylakoid membrane. May target primarily the PsaC subunit. Does not seem to be required for the expression of chloroplast genes encoding PSI subunits. This Arabidopsis thaliana (Mouse-ear cress) protein is Photosystem I assembly factor PSA3, chloroplastic.